A 112-amino-acid polypeptide reads, in one-letter code: CENP-A recruiting complex protein mis19 (112 aa).

As to quaternary structure, component of the CENP-A recruiting complex composed of at least mis16, mis19, mis19 and mis20.

Its subcellular location is the chromosome. It is found in the centromere. The protein resides in the kinetochore. Component of the CENP-A recruiting complex that ensures the integrity of mitotic spindles through maintenance of kinetochore factors mis6/CENP-I and cnp1/CENP-A. Links mis16 and mis18 to recruit CENP-A through interacting with non-sense-mediated mRNA decay (NMD) factors and the SWI/SNF complex. Also links mis18 with the CCAN/mis6/ctf19 complex to promote CENP-A assembly. This Schizosaccharomyces pombe (strain 972 / ATCC 24843) (Fission yeast) protein is CENP-A recruiting complex protein mis19.